The primary structure comprises 427 residues: Tyrosine--tRNA ligase (427 aa).

Tyrosine 33 serves as a coordination point for L-tyrosine. The 'HIGH' region signature appears at 38-47 (PTAPSLHVGN). Residues tyrosine 168 and glutamine 172 each contribute to the L-tyrosine site. The 'KMSKS' region motif lies at 228–232 (KFGKS). Lysine 231 is an ATP binding site. One can recognise an S4 RNA-binding domain in the interval 358–426 (EHMLDLVAST…GKKHHYLIKV (69 aa)).

The protein belongs to the class-I aminoacyl-tRNA synthetase family. TyrS type 1 subfamily. Homodimer.

The protein resides in the cytoplasm. It catalyses the reaction tRNA(Tyr) + L-tyrosine + ATP = L-tyrosyl-tRNA(Tyr) + AMP + diphosphate + H(+). In terms of biological role, catalyzes the attachment of tyrosine to tRNA(Tyr) in a two-step reaction: tyrosine is first activated by ATP to form Tyr-AMP and then transferred to the acceptor end of tRNA(Tyr). In Amoebophilus asiaticus (strain 5a2), this protein is Tyrosine--tRNA ligase.